Here is an 846-residue protein sequence, read N- to C-terminus: Auxin response factor 2A (846 aa).

Residues 1–12 (MAASEVSIQGYS) show a composition bias toward polar residues. The tract at residues 1–30 (MAASEVSIQGYSEPSDGSRPVSETGRSSSG) is disordered. Residues 146–248 (FCKTLTASDT…ELRVGVRRAM (103 aa)) constitute a DNA-binding region (TF-B3). Disordered stretches follow at residues 380–423 (PPAL…HSQA) and 660–693 (DMNI…GVAA). Composition is skewed to polar residues over residues 398–408 (ILPTSPDSSVL) and 414–423 (SRATADHSQA). The span at 675-693 (SDQRSEQSKGSKVDDGVAA) shows a compositional bias: basic and acidic residues. A PB1 domain is found at 720–804 (RSCTKVHKQG…RKIFIYTKEE (85 aa)). Composition is skewed to polar residues over residues 809–824 (NPGT…SSVA) and 836–846 (QLPSESGQAES). Residues 809–846 (NPGTLNSKGEDTSSVAEGSDAKEVKNLQLPSESGQAES) form a disordered region.

This sequence belongs to the ARF family. As to quaternary structure, homodimers and heterodimers. Interacts with ASR1. In terms of tissue distribution, expressed in root, leaf and flower. Expressed in flower buds about three days before opening including ovary, petal and sepal with the highest in stamen. Expressed in stem. Expressed in fruit. Expressed in seeds.

It is found in the nucleus. Auxin response factors (ARFs) are transcriptional factors that bind specifically to the DNA sequence 5'-TGTCTC-3' found in the auxin-responsive promoter elements (AuxREs). Could act as transcriptional activator or repressor. Involved in the control of fruit ripening process. Regulates expression of a number of ripening regulators, transcription factors, and ethylene biosynthesis and signaling components. May act as a transcriptional repressor of auxin-responsive genes. Regulates vegetative growth, lateral root formation and flower organ senescence, possibly partially by regulating gene expression of auxin and ethylene response factor (ERF) genes. Plays a negative role in axillary shoot meristem formation. This is Auxin response factor 2A from Solanum lycopersicum (Tomato).